A 156-amino-acid polypeptide reads, in one-letter code: Cyanate hydratase (156 aa).

Residues R96, E99, and S122 contribute to the active site.

Belongs to the cyanase family.

It catalyses the reaction cyanate + hydrogencarbonate + 3 H(+) = NH4(+) + 2 CO2. Catalyzes the reaction of cyanate with bicarbonate to produce ammonia and carbon dioxide. The sequence is that of Cyanate hydratase from Burkholderia mallei (strain NCTC 10247).